The primary structure comprises 348 residues: Acetylesterase (348 aa).

An N-terminal signal peptide occupies residues 1-16 (MRSILVIPSFVAVLNA). 5 N-linked (GlcNAc...) asparagine glycosylation sites follow: asparagine 64, asparagine 165, asparagine 218, asparagine 223, and asparagine 297.

Belongs to the carbohydrate esterase CE16 family. N-glycosylated.

The protein localises to the secreted. It catalyses the reaction an acetyl ester + H2O = an aliphatic alcohol + acetate + H(+). Its function is as follows. Acetylesterase that acts as an exo-deacetylase. Shows activity towards naphtyl acetate, triacetin, as well as towards glucose- and xylose acetates. Liberates acetic acid from xylo-oligomers. In Hypocrea jecorina (Trichoderma reesei), this protein is Acetylesterase.